Consider the following 218-residue polypeptide: Non-structural protein NS3 (218 aa).

The protein belongs to the orbivirus NS3 family.

In terms of biological role, may play a role in the release of virions from infected cells. The sequence is that of Non-structural protein NS3 (Segment-10) from Camelus dromedarius (Dromedary).